The chain runs to 176 residues: Translation initiation factor IF-3 (176 aa).

This sequence belongs to the IF-3 family. As to quaternary structure, monomer.

It is found in the cytoplasm. Its function is as follows. IF-3 binds to the 30S ribosomal subunit and shifts the equilibrium between 70S ribosomes and their 50S and 30S subunits in favor of the free subunits, thus enhancing the availability of 30S subunits on which protein synthesis initiation begins. The protein is Translation initiation factor IF-3 of Nitratidesulfovibrio vulgaris (strain DSM 19637 / Miyazaki F) (Desulfovibrio vulgaris).